The sequence spans 398 residues: MAIFRDCSNIGKDRSAEDRRRHRELVEDSIKKNLGSIIAEESIIGKSKDKKIKIPIKGIKEFQFIYGKSKPGVGAGDGNEKRGDKFPGDSQEGKGKGNAGNSEGEEVYETEITIEEVIKYLFDDMNLPDIAKKQLSQLEEKSYRKLGYQHKGIPPRLAKKRSVIEKIKRKQASKRSEDGEDITHDKEYGKERFPFIEEDLRYYRIKEDNKRDYNAVVLCIMDVSGSMDQTKKYLARSFYFLLYQFLRLKYANVDVVFIAHTTTAKEVNEREFFHRGESGGTYISSGYEKALEIISERYSPTNWNIYAFHCSDGDNWSEDNRKAVESANKLCEVCNLFGYGEIVPGYYNIGSTIKNEFLNKIKSKNFAAININKKEDVLPALKKLLDKASDKDEKTGLK.

2 disordered regions span residues 1–22 and 68–104; these read MAIF…RRRH and KSKP…NSEG. Basic and acidic residues-rich tracts occupy residues 11-22 and 78-95; these read GKDRSAEDRRRH and GNEK…EGKG.

Belongs to the UPF0229 family.

This is UPF0229 protein Ccel_0490 from Ruminiclostridium cellulolyticum (strain ATCC 35319 / DSM 5812 / JCM 6584 / H10) (Clostridium cellulolyticum).